A 494-amino-acid polypeptide reads, in one-letter code: ETS translocation variant 4 (494 aa).

Disordered regions lie at residues 82–113 (ENSVAFHSPPVKIKKEPQSPGSDPSQSCSHKQ) and 139–201 (AGGS…SGSA). Positions 100 to 113 (SPGSDPSQSCSHKQ) are enriched in polar residues. The span at 176–187 (SSSQSHACHSHS) shows a compositional bias: low complexity. The segment covering 188–197 (YPMNPSSRFP) has biased composition (polar residues). Residues 350–430 (LQLWQFLVAL…AGERYVYKFV (81 aa)) constitute a DNA-binding region (ETS).

The protein belongs to the ETS family. Phosphorylated. In the embryo, expressed ubiquitously until the late blastula stage, in the marginal zone of gastrula stages, in the presumptive forebrain and hindbrain and in the trunk region of early somite stages. In later stages, also expressed in Rohon-Beard neurons, epiphysis, lateral line placodes, pectoral fin buds, developing lens and heart.

The protein localises to the nucleus. In terms of biological role, transcriptional activator that binds to the (5'-CCGGA[AT]-3') motif. May control the acquisition of specific cell fates at an early stage during development of the somites and nervous system. May mediate the cellular effects of the fibroblast growth factors on embryogenesis. This chain is ETS translocation variant 4 (etv4), found in Danio rerio (Zebrafish).